Consider the following 64-residue polypeptide: Putative neurotoxin-G (64 aa).

An N-terminal signal peptide occupies residues 1–19 (MFAMVTVTVLLLISSGIFC). 3 disulfides stabilise this stretch: C25–C45, C32–C54, and C36–C56.

Expressed by the venom gland.

Its subcellular location is the secreted. The chain is Putative neurotoxin-G from Lychas mucronatus (Chinese swimming scorpion).